The following is a 172-amino-acid chain: Protein-export protein SecB (172 aa).

It belongs to the SecB family. Homotetramer, a dimer of dimers. One homotetramer interacts with 1 SecA dimer.

The protein localises to the cytoplasm. One of the proteins required for the normal export of preproteins out of the cell cytoplasm. It is a molecular chaperone that binds to a subset of precursor proteins, maintaining them in a translocation-competent state. It also specifically binds to its receptor SecA. The protein is Protein-export protein SecB of Maricaulis maris (strain MCS10) (Caulobacter maris).